Here is a 122-residue protein sequence, read N- to C-terminus: Small ribosomal subunit protein uS13 (122 aa).

The tract at residues 98 to 122 is disordered; sequence VRGQRTHTNARTRKGPAKAIAGKKK.

It belongs to the universal ribosomal protein uS13 family. In terms of assembly, part of the 30S ribosomal subunit. Forms a loose heterodimer with protein S19. Forms two bridges to the 50S subunit in the 70S ribosome.

Located at the top of the head of the 30S subunit, it contacts several helices of the 16S rRNA. In the 70S ribosome it contacts the 23S rRNA (bridge B1a) and protein L5 of the 50S subunit (bridge B1b), connecting the 2 subunits; these bridges are implicated in subunit movement. Contacts the tRNAs in the A and P-sites. This Ruegeria pomeroyi (strain ATCC 700808 / DSM 15171 / DSS-3) (Silicibacter pomeroyi) protein is Small ribosomal subunit protein uS13.